Reading from the N-terminus, the 84-residue chain is U8-theraphotoxin-Hhn1d (84 aa).

A signal peptide spans 1–21; that stretch reads MKVVLIVCLVWVMAMMELVSC. 5 disulfide bridges follow: Cys-23–Cys-35, Cys-29–Cys-44, Cys-34–Cys-67, Cys-54–Cys-75, and Cys-69–Cys-81.

It belongs to the AVIT (prokineticin) family. In terms of tissue distribution, expressed by the venom gland.

It is found in the secreted. The protein is U8-theraphotoxin-Hhn1d of Cyriopagopus hainanus (Chinese bird spider).